The primary structure comprises 65 residues: Conotoxin Lt5.1 (65 aa).

A signal peptide spans 1–19 (MRCLPVFIILLLLIPSAPS). The propeptide occupies 20 to 48 (VDAQRKTKDDVPLASFHDNAKRTLKRLWN).

Belongs to the conotoxin T superfamily. In terms of processing, contains 2 disulfide bonds that can be either 'C1-C3, C2-C4' or 'C1-C4, C2-C3', since these disulfide connectivities have been observed for conotoxins with cysteine framework V (for examples, see AC P0DQQ7 and AC P81755). As to expression, expressed by the venom duct.

It is found in the secreted. The chain is Conotoxin Lt5.1 from Conus litteratus (Lettered cone).